The sequence spans 343 residues: Probable transcription factor MYB58 (343 aa).

The tract at residues 1 to 30 (MARAPGGVRRRSGRRGAGGGGAGGGGEALR) is disordered. Positions 15-27 (RGAGGGGAGGGGE) are enriched in gly residues. HTH myb-type domains are found at residues 26 to 78 (GEAL…VNKL) and 79 to 134 (RPNL…KRLA). 2 consecutive DNA-binding regions (H-T-H motif) follow at residues 54–77 (WSSI…WVNK) and 107–130 (WARI…STRQ). Disordered stretches follow at residues 137–169 (LRGP…TATF), 219–238 (PPAD…PPPL), and 307–343 (DDLP…DDVL). The segment covering 157-169 (PSSSSLDSQTATF) has biased composition (polar residues). Pro residues predominate over residues 320–336 (QPPPPPPPPPPPSPSPS).

It is found in the nucleus. Its function is as follows. Probable transcription factor. In Oryza sativa subsp. japonica (Rice), this protein is Probable transcription factor MYB58.